Reading from the N-terminus, the 382-residue chain is Beta-lactamase CMY-10 (382 aa).

Residues 1 to 23 form the signal peptide; sequence MQQRQSILWGAVATLMWAGLAHA. Catalysis depends on serine 88, which acts as the Acyl-ester intermediate. Serine 88 is an AMP binding site. Positions 88, 144, 174, 336, 338, and 363 each coordinate GMP. Positions 88, 144, 174, 336, 338, and 363 each coordinate IMP. Tyrosine 174 provides a ligand contact to AMP. Serine 338 is a binding site for AMP.

It belongs to the class-C beta-lactamase family. Monomer.

It catalyses the reaction a beta-lactam + H2O = a substituted beta-amino acid. With respect to regulation, inhibited by various nucleotides in vitro, including adenosine 5'-(P-acetyl)monophosphate (acAMP), inosine-5'-monophosphate (IMP) and guanosine-5'-monophosphate (GMP); IMP and GMP exhibit strongest competitive inhibition. Inhibited by the beta-lactamase-blocking agent, avibactam. Inhibited by clavulanic acid. Weakly inhibited by citric acid. In terms of biological role, class C beta-lactamase which confers resistance to penicillins and cephalosporins. Has benzylpenicillin-, ceftazidime-, nitrocefin- and imipenem-hydrolyzing activity. This chain is Beta-lactamase CMY-10, found in Klebsiella aerogenes (Enterobacter aerogenes).